Consider the following 272-residue polypeptide: Type III pantothenate kinase (272 aa).

6 to 13 (DVRNTHTV) is a binding site for ATP. 109-112 (GADR) serves as a coordination point for substrate. D111 (proton acceptor) is an active-site residue. D131 contacts K(+). S134 contacts ATP. A substrate-binding site is contributed by T186.

Belongs to the type III pantothenate kinase family. As to quaternary structure, homodimer. Requires NH4(+) as cofactor. K(+) is required as a cofactor.

The protein localises to the cytoplasm. The catalysed reaction is (R)-pantothenate + ATP = (R)-4'-phosphopantothenate + ADP + H(+). The protein operates within cofactor biosynthesis; coenzyme A biosynthesis; CoA from (R)-pantothenate: step 1/5. In terms of biological role, catalyzes the phosphorylation of pantothenate (Pan), the first step in CoA biosynthesis. This Mycobacterium marinum (strain ATCC BAA-535 / M) protein is Type III pantothenate kinase.